Here is a 1099-residue protein sequence, read N- to C-terminus: 1-phosphatidylinositol 4,5-bisphosphate phosphodiesterase 1 (1099 aa).

A compositionally biased stretch (basic and acidic residues) spans 1 to 10; the sequence is MLESLNRRNS. 2 disordered regions span residues 1–109 and 128–164; these read MLES…SSTT and ESRSIVSNNGGSPMSDSTTVTSTLSTDTAPKRGKSIQ. Composition is skewed to low complexity over residues 43 to 66 and 86 to 109; these read PPKSQLLLRKSSSPSSYSPIKSDL and PKQQSSLSSSSSSSSSSNTKSSTT. Over residues 131-141 the composition is skewed to polar residues; the sequence is SIVSNNGGSPM. The segment covering 142–155 has biased composition (low complexity); sequence SDSTTVTSTLSTDT. In terms of domain architecture, PI-PLC X-box spans 566-726; sequence YDYPLNEYFI…LKHKFIIKVK (161 aa). Catalysis depends on residues His-579 and His-642. 2 residues coordinate substrate: Lys-724 and Lys-726. The interval 742–780 is disordered; sequence FTTSTTTTTTTTTTTTTATSLSEDNENNKSNSSSTSSFI. Positions 743-778 are enriched in low complexity; sequence TTSTTTTTTTTTTTTTATSLSEDNENNKSNSSSTSS. The PI-PLC Y-box domain maps to 794-912; that stretch reads ELSNLGIYTQ…GYVLKPSVLR (119 aa). Substrate is bound by residues Ser-823 and Arg-852. The C2 domain maps to 917 to 1071; sequence KSSSSNVDTR…QGYRYIYLND (155 aa).

The catalysed reaction is a 1,2-diacyl-sn-glycero-3-phospho-(1D-myo-inositol-4,5-bisphosphate) + H2O = 1D-myo-inositol 1,4,5-trisphosphate + a 1,2-diacyl-sn-glycerol + H(+). Functionally, the production of the second messenger molecules diacylglycerol (DAG) and inositol 1,4,5-trisphosphate (IP3) is mediated by activated phosphatidylinositol-specific phospholipase C enzymes. The chain is 1-phosphatidylinositol 4,5-bisphosphate phosphodiesterase 1 (PLC1) from Candida albicans (Yeast).